Here is a 174-residue protein sequence, read N- to C-terminus: CDP-archaeol synthase (174 aa).

4 consecutive transmembrane segments (helical) span residues 51–71 (LIGLLQILLAPHIAPYLAGFI), 74–94 (SLLVGYSYIALITMPFGALLG), 112–132 (MLPIADQLDFVAGAWVLTFLL), and 136–156 (WLLANFTIWVAIAVILIIPVF).

This sequence belongs to the CDP-archaeol synthase family. Requires Mg(2+) as cofactor.

It is found in the cell membrane. The enzyme catalyses 2,3-bis-O-(geranylgeranyl)-sn-glycerol 1-phosphate + CTP + H(+) = CDP-2,3-bis-O-(geranylgeranyl)-sn-glycerol + diphosphate. Its pathway is membrane lipid metabolism; glycerophospholipid metabolism. Its function is as follows. Catalyzes the formation of CDP-2,3-bis-(O-geranylgeranyl)-sn-glycerol (CDP-archaeol) from 2,3-bis-(O-geranylgeranyl)-sn-glycerol 1-phosphate (DGGGP) and CTP. This reaction is the third ether-bond-formation step in the biosynthesis of archaeal membrane lipids. This chain is CDP-archaeol synthase, found in Methanocella arvoryzae (strain DSM 22066 / NBRC 105507 / MRE50).